Reading from the N-terminus, the 330-residue chain is tRNA-modifying protein YgfZ (330 aa).

Trp28 and Trp190 together coordinate folate.

Belongs to the tRNA-modifying YgfZ family.

The protein localises to the cytoplasm. Folate-binding protein involved in regulating the level of ATP-DnaA and in the modification of some tRNAs. It is probably a key factor in regulatory networks that act via tRNA modification, such as initiation of chromosomal replication. In Yersinia enterocolitica serotype O:8 / biotype 1B (strain NCTC 13174 / 8081), this protein is tRNA-modifying protein YgfZ.